The following is a 768-amino-acid chain: Ral guanine nucleotide dissociation stimulator-like 1 (768 aa).

In terms of domain architecture, N-terminal Ras-GEF spans 65 to 196 (KIRTIKAGTL…RAQNLLEQFQ (132 aa)). The region spanning 232–501 (SEDLVAEQLT…YALSCEIEAA (270 aa)) is the Ras-GEF domain. Ser-520 carries the post-translational modification Phosphoserine. The segment at 528–623 (MITSPTPTKE…PPSCNNNPKI (96 aa)) is disordered. Low complexity-rich tracts occupy residues 541 to 561 (STAS…SCES), 586 to 596 (ESSSSCSSIHS), and 605 to 621 (SSLI…NNNP). In terms of domain architecture, Ras-associating spans 648-735 (DTCIIRISVE…FDFILRKKNS (88 aa)).

In terms of assembly, interacts with Ras. As to expression, expressed in a wide variety of tissues with strong expression being seen in the heart, brain, kidney, spleen and testis.

Functionally, probable guanine nucleotide exchange factor. The sequence is that of Ral guanine nucleotide dissociation stimulator-like 1 (RGL1) from Homo sapiens (Human).